Here is a 180-residue protein sequence, read N- to C-terminus: NADH-ubiquinone oxidoreductase chain 5 (180 aa).

The helical transmembrane segment at 131–148 (VYHYAFAMLLGSTPFVTF) threads the bilayer.

The protein belongs to the complex I subunit 5 family.

Its subcellular location is the mitochondrion inner membrane. The catalysed reaction is a ubiquinone + NADH + 5 H(+)(in) = a ubiquinol + NAD(+) + 4 H(+)(out). Its function is as follows. Core subunit of the mitochondrial membrane respiratory chain NADH dehydrogenase (Complex I) that is believed to belong to the minimal assembly required for catalysis. Complex I functions in the transfer of electrons from NADH to the respiratory chain. The immediate electron acceptor for the enzyme is believed to be ubiquinone. The chain is NADH-ubiquinone oxidoreductase chain 5 (ND5) from Zea mays (Maize).